We begin with the raw amino-acid sequence, 204 residues long: MAKNAMLCLLILSVVLALAFATNEKDDKEAGNLSTGIFGKAGRFVTVALAMSSRLGGAGASQGGGAVHGESLKSNQLQNAYRMALPPPMQIKSAEIDGWKPSPDEYLKKFAQEFRRNTGMKPQSYNEEKRVTPGGPDPLHNREKILEEQKRVTPGGPDPLHNREKTLEEQKRVTPGGPDPLHNREKTLEEQKRVTPGVPDRQHR.

The first 21 residues, 1–21, serve as a signal peptide directing secretion; sequence MAKNAMLCLLILSVVLALAFA. Positions 21–83 are required for secretion from the host cytoplasm to the host apoplasm; the sequence is ATNEKDDKEA…SNQLQNAYRM (63 aa). An N-linked (GlcNAc...) asparagine glycan is attached at asparagine 32. A disordered region spans residues 116–204; it reads RNTGMKPQSY…TPGVPDRQHR (89 aa). Basic and acidic residues-rich tracts occupy residues 139 to 151, 160 to 172, and 181 to 193; these read LHNREKILEEQKR and LHNREKTLEEQKR. 3 consecutive propeptides (removed in mature form) follow at residues 142 to 150, 163 to 171, and 184 to 192; these read REKILEEQK and REKTLEEQK.

This sequence belongs to the CLV3/ESR signal peptide family. In terms of processing, preprocessing of the precursor by host proteases leads first to the production of 21-mer CLE-containing peptides (Arg-130 to Lys-150, Arg-151 to Lys-171 and Arg-172 to Lys-192) followed by an ultimate C-term trimming to give the mature 12-mer CLE1-1 peptide. As to expression, highly expressed exclusively within the dorsal esophageal gland cell during syncytium formation in host plants.

It is found in the secreted. It localises to the host cytoplasm. The protein resides in the host extracellular space. Its subcellular location is the extracellular space. The protein localises to the apoplast. Its function is as follows. Mimics host plant CLE extracellular signal peptides that regulate cell fate. May play a role in the differentiation or division of feeding cells (syncytia) induced in plant roots during infection. In Globodera rostochiensis (Golden nematode worm), this protein is CLAVATA3/ESR (CLE)-related protein 1.